The sequence spans 573 residues: Membrane protein insertase YidC (573 aa).

The chain crosses the membrane as a helical span at residues 6–26 (VFLIFAWLMVAALLWMEWGKD). The tract at residues 63–82 (PQAGSPAAVPATSTTTATPA) is disordered. 5 helical membrane-spanning segments follow: residues 355 to 375 (FSIMAIIGQGLFWVLSHLHSF), 379 to 399 (WGWAIIGLVVLLRLALYPLSA), 446 to 466 (GGCLPLLIQMPIFFALYWVLV), 488 to 508 (PYFILPVLNIAIMWATQKLTP), and 524 to 544 (PLVFGVMMAFMPAGLVLYWVV).

Belongs to the OXA1/ALB3/YidC family. Type 1 subfamily. In terms of assembly, interacts with the Sec translocase complex via SecD. Specifically interacts with transmembrane segments of nascent integral membrane proteins during membrane integration.

Its subcellular location is the cell inner membrane. Its function is as follows. Required for the insertion and/or proper folding and/or complex formation of integral membrane proteins into the membrane. Involved in integration of membrane proteins that insert both dependently and independently of the Sec translocase complex, as well as at least some lipoproteins. Aids folding of multispanning membrane proteins. This Xanthomonas campestris pv. campestris (strain 8004) protein is Membrane protein insertase YidC.